The primary structure comprises 360 residues: Transcriptional coactivator MYCFIDRAFT_190109 (360 aa).

The HTH iclR-type domain occupies 3–67 (GMALNQLLAC…GFLHEPRPGQ (65 aa)). The H-T-H motif DNA-binding region spans 33 to 52 (ARDVADLTGVPETQLCRVVR).

It is found in the nucleus. In terms of biological role, transcriptional coactivator; part of the gene cluster that mediates the biosynthesis of an emodin derivative that may be involved in black Sigatoka disease of banana. With MYCFIDRAFT_198930, coregulates the production of the PKS8-1 cluster product. The chain is Transcriptional coactivator MYCFIDRAFT_190109 from Pseudocercospora fijiensis (strain CIRAD86) (Black leaf streak disease fungus).